The chain runs to 536 residues: MNMMMQKLSILFLHLILLVLLCVHPLTTVADRNSTDWCDKTPYPDPCKCYFKNHNGFQQPTQLSEFRVMLVEAAMDRAISARAELTNSGKNCTDSKKQAVLADCIDLYGDTIMQLNRTLHGVSPKAGAAKSCTDFDAQTWLSTALTNTETCRRGSSDLNVTDFITPIVSNTKISHLISNCLAVNGALLTAGNKGNTTANQKGFPTWLSRKDKRLLRAVRANLVVAKDGSGHFNTVQAAIDVAGRRKVTSGRFVIYVKRGIYQENINVRLNNDDIMLVGDGMRSTIITGGRSVQGGYTTYNSATAGIEGLHFIAKGITFRNTAGPAKGQAVALRSSSDLSIFYKCSIEGYQDTLMVHSQRQFYRECYIYGTVDFIFGNAAAVFQNCLILPRRPLKGQANVITAQGRADPFQNTGISIHNSRILPAPDLKPVVGTVKTYMGRPWMKFSRTVVLQTYLDNVVSPVGWSPWIEGSVFGLDTLFYAEYKNTGPASSTRWRVSWKGFHVLGRASDASAFTVGKFIAGTAWLPRTGIPFTSGL.

Positions 1 to 30 (MNMMMQKLSILFLHLILLVLLCVHPLTTVA) are cleaved as a signal peptide. The interval 31–183 (DRNSTDWCDK…SHLISNCLAV (153 aa)) is pectinesterase inhibitor 59. 5 N-linked (GlcNAc...) asparagine glycosylation sites follow: asparagine 33, asparagine 91, asparagine 116, asparagine 159, and asparagine 195. The segment at 221-522 (NLVVAKDGSG…FTVGKFIAGT (302 aa)) is pectinesterase 59. Substrate-binding residues include threonine 298 and glutamine 328. Catalysis depends on aspartate 351, which acts as the Proton donor; for pectinesterase activity. Cysteine 365 and cysteine 385 are disulfide-bonded. Aspartate 372 acts as the Nucleophile; for pectinesterase activity in catalysis. The substrate site is built by arginine 440 and tryptophan 442.

The protein in the N-terminal section; belongs to the PMEI family. This sequence in the C-terminal section; belongs to the pectinesterase family. As to expression, expressed in siliques.

The protein localises to the secreted. Its subcellular location is the cell wall. It carries out the reaction [(1-&gt;4)-alpha-D-galacturonosyl methyl ester](n) + n H2O = [(1-&gt;4)-alpha-D-galacturonosyl](n) + n methanol + n H(+). It participates in glycan metabolism; pectin degradation; 2-dehydro-3-deoxy-D-gluconate from pectin: step 1/5. Functionally, acts in the modification of cell walls via demethylesterification of cell wall pectin. The chain is Probable pectinesterase/pectinesterase inhibitor 59 (PME59) from Arabidopsis thaliana (Mouse-ear cress).